A 911-amino-acid polypeptide reads, in one-letter code: Chromatin assembly factor 1 subunit A (911 aa).

The binds PCNA stretch occupies residues 1-31 (MLEEPEAATRTAAAVDCKDRPGFPVKRLIQA). Positions 166 to 200 (HMEEEPGSPGDPKRTGDCQAGSLQSCPELTPGSRT) are disordered. The tract at residues 176–327 (DPKRTGDCQA…LHRDREQQRE (152 aa)) is binds CBX1 and CBX3 chromo shadow domains. Residues 186 to 200 (GSLQSCPELTPGSRT) are compositionally biased toward polar residues. Phosphoserine occurs at positions 190 and 208. Residues 217–230 (FIEKVPVVVLEDIL) carry the PxVxL motif motif. Disordered regions lie at residues 250-408 (SESE…EEEK) and 578-618 (DSDD…VPHG). A compositionally biased stretch (low complexity) spans 265–281 (LSHSSTNSSSPTSSPEG). S293 bears the Phosphoserine mark. The segment covering 310 to 408 (STEKGRSKLH…EEKRLREEEK (99 aa)) has biased composition (basic and acidic residues). Composition is skewed to acidic residues over residues 578–589 (DSDDEWEEEEPG) and 597–612 (GDED…EDDG). A necessary for homodimerization and competence for chromatin assembly region spans residues 621-657 (SEDEGVTEECADPENHKVHQKLKAKEWDELLAKGKRF). The segment at 639-911 (HQKLKAKEWD…APIPAPTLCK (273 aa)) is binds to p60. S776 carries the post-translational modification Phosphoserine. Disordered regions lie at residues 819 to 843 (PSAP…MLLK) and 866 to 886 (GSGD…DDTD). Over residues 827-839 (GSASTEGPGQSTP) the composition is skewed to polar residues. T838 is subject to Phosphothreonine. Over residues 876–886 (DTEEDEEDDTD) the composition is skewed to acidic residues.

Belongs to the CHAF1A family. Homodimer. Part of the CAF-1 complex that contains RBBP4, CHAF1B and CHAF1A. CHAF1A binds directly to CHAF1B. Only minor amounts of RBBP4 are complexed with CHAF1A and CHAF1B in G1 phase. Interacts with PCNA; the interaction is direct. Interacts (via the PxVxL motif) with CBX5; the interaction is direct. Interacts with MBD1. Interacts with histones H3.1, H3.2 and H3.1t.

The protein resides in the nucleus. Functionally, acts as a component of the histone chaperone complex chromatin assembly factor 1 (CAF-1), which assembles histone octamers onto DNA during replication and repair. CAF-1 performs the first step of the nucleosome assembly process, bringing newly synthesized histones H3 and H4 to replicating DNA; histones H2A/H2B can bind to this chromatin precursor subsequent to DNA replication to complete the histone octamer. It may play a role in heterochromatin maintenance in proliferating cells by bringing newly synthesized cbx proteins to heterochromatic DNA replication foci. The chain is Chromatin assembly factor 1 subunit A from Mus musculus (Mouse).